We begin with the raw amino-acid sequence, 491 residues long: Iota-carrageenase (491 aa).

An N-terminal signal peptide occupies residues 1 to 23 (MRLYFRKLWLTNLFLGGALASSA). Cystine bridges form between cysteine 269–cysteine 298, cysteine 336–cysteine 360, cysteine 408–cysteine 476, and cysteine 412–cysteine 484.

Belongs to the glycosyl hydrolase 82 family.

It is found in the secreted. The catalysed reaction is Endohydrolysis of 1,4-beta-D-linkages between D-galactose 4-sulfate and 3,6-anhydro-D-galactose-2-sulfate in iota-carrageenans.. In terms of biological role, hydrolyzes iota-carrageenans, sulfated 1,3-alpha-1,4-beta galactans from red algal cell walls, with an inversion of anomeric configuration. Also active against hybrid iota-/nu-carrageenan, not active against kappa- or lambda-carrageenans. This is Iota-carrageenase from Alteromonas macleodii (Pseudoalteromonas macleodii).